A 1023-amino-acid polypeptide reads, in one-letter code: Phosphoenolpyruvate carboxylase (1023 aa).

Active-site residues include H199 and K669.

The protein belongs to the PEPCase type 1 family. Requires Mg(2+) as cofactor.

It catalyses the reaction oxaloacetate + phosphate = phosphoenolpyruvate + hydrogencarbonate. Its function is as follows. Forms oxaloacetate, a four-carbon dicarboxylic acid source for the tricarboxylic acid cycle. The polypeptide is Phosphoenolpyruvate carboxylase (Trichormus variabilis (strain ATCC 29413 / PCC 7937) (Anabaena variabilis)).